Here is a 93-residue protein sequence, read N- to C-terminus: Small ribosomal subunit protein uS19 (93 aa).

The protein belongs to the universal ribosomal protein uS19 family.

Protein S19 forms a complex with S13 that binds strongly to the 16S ribosomal RNA. The polypeptide is Small ribosomal subunit protein uS19 (Desulfitobacterium hafniense (strain DSM 10664 / DCB-2)).